Consider the following 721-residue polypeptide: Polyribonucleotide nucleotidyltransferase (721 aa).

D487 and D493 together coordinate Mg(2+). Positions 554 to 613 (PRIETFKIPTDKIREVIGTGGKVIREIVEKTGAKVNIDDDGTVKVASSDGESIKAAIKWI) constitute a KH domain. The 69-residue stretch at 623–691 (NAIYDGTVVK…DRGKTRLSMK (69 aa)) folds into the S1 motif domain. The disordered stretch occupies residues 697-721 (TGEDLEAKQKAEAEKAKAEGAPAAE). Residues 701–714 (LEAKQKAEAEKAKA) are compositionally biased toward basic and acidic residues.

This sequence belongs to the polyribonucleotide nucleotidyltransferase family. The cofactor is Mg(2+).

The protein resides in the cytoplasm. The catalysed reaction is RNA(n+1) + phosphate = RNA(n) + a ribonucleoside 5'-diphosphate. Involved in mRNA degradation. Catalyzes the phosphorolysis of single-stranded polyribonucleotides processively in the 3'- to 5'-direction. This is Polyribonucleotide nucleotidyltransferase from Rhodopseudomonas palustris (strain BisA53).